Consider the following 385-residue polypeptide: Acetate kinase (385 aa).

A Mg(2+)-binding site is contributed by N9. An ATP-binding site is contributed by K16. Residue R87 coordinates substrate. The Proton donor/acceptor role is filled by D144. ATP is bound by residues 202–206 (HLGSG) and 277–279 (DMR). E373 lines the Mg(2+) pocket.

It belongs to the acetokinase family. As to quaternary structure, homodimer. Requires Mg(2+) as cofactor. Mn(2+) serves as cofactor.

Its subcellular location is the cytoplasm. It catalyses the reaction acetate + ATP = acetyl phosphate + ADP. It functions in the pathway metabolic intermediate biosynthesis; acetyl-CoA biosynthesis; acetyl-CoA from acetate: step 1/2. Functionally, catalyzes the formation of acetyl phosphate from acetate and ATP. Can also catalyze the reverse reaction. The chain is Acetate kinase from Rickettsia felis (strain ATCC VR-1525 / URRWXCal2) (Rickettsia azadi).